The primary structure comprises 384 residues: Actin-binding Rho-activating protein (384 aa).

A compositionally biased stretch (basic and acidic residues) spans 1-11 (MARGEKGRGEG). Disordered regions lie at residues 1 to 20 (MARG…LRKV), 32 to 159 (GWQQ…SPTR), and 181 to 211 (EQEE…EQDG). The span at 35–47 (QWANENSTRQAQE) shows a compositional bias: polar residues. Residues 134 to 145 (DGDEPEPEQPES) show a composition bias toward acidic residues. 2 positions are modified to phosphoserine: serine 156 and serine 191. 2 actin-binding regions span residues 202-302 (ETEE…AERA) and 303-384 (KRAE…TLLK). Interaction with actin stretches follow at residues 243 to 288 (SQVG…GDEG) and 355 to 384 (MRAR…TLLK).

Binds F-actin and ABLIM1, ABLIM2 and ABLIM3. Interaction with ABLIM2 and ABLIM3 enhances activity. As to expression, specifically expressed in heart and skeletal muscles.

It localises to the cytoplasm. The protein resides in the myofibril. It is found in the sarcomere. Its subcellular location is the cytoskeleton. In terms of biological role, acts as an activator of serum response factor (SRF)-dependent transcription possibly by inducing nuclear translocation of MKL1 or MKL2 and through a mechanism requiring Rho-actin signaling. The sequence is that of Actin-binding Rho-activating protein (ABRA) from Sus scrofa (Pig).